Reading from the N-terminus, the 336-residue chain is Ketol-acid reductoisomerase (NADP(+)) (336 aa).

The KARI N-terminal Rossmann domain occupies 2–181 (AKVYYEKDVM…GATRAGVLET (180 aa)). NADP(+) is bound by residues 25 to 28 (YGSQ), Arg-48, Ser-52, and 82 to 85 (DELQ). Residue His-107 is part of the active site. Gly-133 contacts NADP(+). The KARI C-terminal knotted domain maps to 182 to 327 (TFKEETETDL…RQLREMMPFV (146 aa)). 4 residues coordinate Mg(2+): Asp-190, Glu-194, Glu-226, and Glu-230. Ser-251 lines the substrate pocket.

The protein belongs to the ketol-acid reductoisomerase family. Mg(2+) is required as a cofactor.

The catalysed reaction is (2R)-2,3-dihydroxy-3-methylbutanoate + NADP(+) = (2S)-2-acetolactate + NADPH + H(+). The enzyme catalyses (2R,3R)-2,3-dihydroxy-3-methylpentanoate + NADP(+) = (S)-2-ethyl-2-hydroxy-3-oxobutanoate + NADPH + H(+). It functions in the pathway amino-acid biosynthesis; L-isoleucine biosynthesis; L-isoleucine from 2-oxobutanoate: step 2/4. Its pathway is amino-acid biosynthesis; L-valine biosynthesis; L-valine from pyruvate: step 2/4. In terms of biological role, involved in the biosynthesis of branched-chain amino acids (BCAA). Catalyzes an alkyl-migration followed by a ketol-acid reduction of (S)-2-acetolactate (S2AL) to yield (R)-2,3-dihydroxy-isovalerate. In the isomerase reaction, S2AL is rearranged via a Mg-dependent methyl migration to produce 3-hydroxy-3-methyl-2-ketobutyrate (HMKB). In the reductase reaction, this 2-ketoacid undergoes a metal-dependent reduction by NADPH to yield (R)-2,3-dihydroxy-isovalerate. In Bacillus cytotoxicus (strain DSM 22905 / CIP 110041 / 391-98 / NVH 391-98), this protein is Ketol-acid reductoisomerase (NADP(+)).